The following is a 247-amino-acid chain: DNA polymerase sliding clamp (247 aa).

Belongs to the PCNA family. As to quaternary structure, homotrimer. The subunits circularize to form a toroid; DNA passes through its center. Replication factor C (RFC) is required to load the toroid on the DNA.

Its function is as follows. Sliding clamp subunit that acts as a moving platform for DNA processing. Responsible for tethering the catalytic subunit of DNA polymerase and other proteins to DNA during high-speed replication. This chain is DNA polymerase sliding clamp, found in Thermofilum pendens (strain DSM 2475 / Hrk 5).